Here is a 411-residue protein sequence, read N- to C-terminus: Dihydrofolate synthase/folylpolyglutamate synthase (411 aa).

53–56 (GKGT) provides a ligand contact to ATP. Ser77 lines the Mg(2+) pocket. 7,8-dihydropteroate is bound by residues 116-119 (TYFE) and 147-149 (LDA). His167 is a binding site for Mg(2+). The ATP site is built by Arg283 and Asp296.

This sequence belongs to the folylpolyglutamate synthase family. As to quaternary structure, monomer. It depends on Mg(2+) as a cofactor.

It catalyses the reaction 7,8-dihydropteroate + L-glutamate + ATP = 7,8-dihydrofolate + ADP + phosphate + H(+). The catalysed reaction is (6S)-5,6,7,8-tetrahydrofolyl-(gamma-L-Glu)(n) + L-glutamate + ATP = (6S)-5,6,7,8-tetrahydrofolyl-(gamma-L-Glu)(n+1) + ADP + phosphate + H(+). It carries out the reaction 10-formyltetrahydrofolyl-(gamma-L-Glu)(n) + L-glutamate + ATP = 10-formyltetrahydrofolyl-(gamma-L-Glu)(n+1) + ADP + phosphate + H(+). The enzyme catalyses (6R)-5,10-methylenetetrahydrofolyl-(gamma-L-Glu)(n) + L-glutamate + ATP = (6R)-5,10-methylenetetrahydrofolyl-(gamma-L-Glu)(n+1) + ADP + phosphate + H(+). The protein operates within cofactor biosynthesis; tetrahydrofolate biosynthesis; 7,8-dihydrofolate from 2-amino-4-hydroxy-6-hydroxymethyl-7,8-dihydropteridine diphosphate and 4-aminobenzoate: step 2/2. It functions in the pathway cofactor biosynthesis; tetrahydrofolylpolyglutamate biosynthesis. In terms of biological role, functions in two distinct reactions of the de novo folate biosynthetic pathway. Catalyzes the addition of a glutamate residue to dihydropteroate (7,8-dihydropteroate or H2Pte) to form dihydrofolate (7,8-dihydrofolate monoglutamate or H2Pte-Glu). Also catalyzes successive additions of L-glutamate to tetrahydrofolate or 10-formyltetrahydrofolate or 5,10-methylenetetrahydrofolate, leading to folylpolyglutamate derivatives. In Buchnera aphidicola subsp. Acyrthosiphon pisum (strain APS) (Acyrthosiphon pisum symbiotic bacterium), this protein is Dihydrofolate synthase/folylpolyglutamate synthase (folC).